We begin with the raw amino-acid sequence, 815 residues long: MGKKKVKDRSAGTDSSSETAGPSCTHIRKGTENSVLKKACLNEHWSSCQDCEQDKPEEKQILEDQTDGESPAVWMCLKCGHRGCGRSGNQHAIKHYETPRSEPHCLVLSLDVWSVWCYICDDEVQYSSTGQLAQLITNIRKQVLTAPDKRNASKKSWKEDISVMNSAEQTQDEEKGKKGKQKSSSKQEDSPKSHQSAAAGSSAVVSVRGLSNLGNTCFFNAVVQSLSQTQYLRELLKQIAEEKSSFSITPALSSELDPLQIQLERPGSLTLAMCQLMNEIQETKKGVVTPKELFTQVCKKAPRFKGFQQQDSQELLRYLLDGMRAEEAKRVNSGILEALKSSGKNFEAEQTKKIVKEYEKDGAPKNFVDRVFGGAMSSTVMCKECKTVSLVTEMFLDLSLPVADEAYRKKNQKKAVQHRHSVSDDGDQDTSSLANGNEDMPTGTGSKYQQKKAKKQAKKQAKNQRRQQKQGGKVTLDAITNQSSTDPADSSMQTQTVSVNGSADAQPADTNQEDLSLEKHNEDQDDEEPEQEQAASVNNRFTALSEDQTTEDIAEQVNEDEDEIEQNCAEEEELVEELNTMSLTTPSEGDVENGEDTLEDVKEYTVVNRDPELAFRALASRTAPVKQECSVESCLYQFTEVEHLTENNRLMCVTCTKQQPGYKDGCKKAVYRDALKQMLISDPPVVLTLHLKRFQQVAYSVCKVNRHVQFPQILDLAPFCSLNCTGVKEGETQVLYSLYGIVEHSGTMRSGHYTAYVKSRPSTHNCVQNGTAAASGDAEASKGSWFHISDSSVHPVPEAKVQSSQAYLLFYEKIS.

Positions 1–27 (MGKKKVKDRSAGTDSSSETAGPSCTHI) are disordered. The span at 12-22 (GTDSSSETAGP) shows a compositional bias: polar residues. The UBP-type zinc-finger motif lies at 22–143 (PSCTHIRKGT…QLITNIRKQV (122 aa)). Residues Cys-24, His-26, Cys-48, Cys-51, Cys-76, Cys-79, Cys-84, His-91, His-95, His-104, Cys-117, and Cys-120 each coordinate Zn(2+). Residues 148–161 (DKRNASKKSWKEDI) show a composition bias toward basic and acidic residues. Positions 148–200 (DKRNASKKSWKEDISVMNSAEQTQDEEKGKKGKQKSSSKQEDSPKSHQSAAAG) are disordered. One can recognise a USP domain in the interval 208–814 (RGLSNLGNTC…QAYLLFYEKI (607 aa)). Catalysis depends on Cys-217, which acts as the Nucleophile. 2 stretches are compositionally biased toward basic residues: residues 411-420 (NQKKAVQHRH) and 449-468 (QQKK…RRQQ). The tract at residues 411 to 510 (NQKKAVQHRH…GSADAQPADT (100 aa)) is disordered. Residues 478-510 (AITNQSSTDPADSSMQTQTVSVNGSADAQPADT) show a composition bias toward polar residues. The active-site Proton acceptor is His-752.

It belongs to the peptidase C19 family. USP16 subfamily. Homotetramer.

It localises to the nucleus. It carries out the reaction Thiol-dependent hydrolysis of ester, thioester, amide, peptide and isopeptide bonds formed by the C-terminal Gly of ubiquitin (a 76-residue protein attached to proteins as an intracellular targeting signal).. In terms of biological role, specifically deubiquitinates 'Lys-120' of histone H2A (H2AK119Ub), a specific tag for epigenetic transcriptional repression, thereby acting as a coactivator. Deubiquitination of histone H2A is a prerequisite for subsequent phosphorylation at 'Ser-11' of histone H3 (H3S10ph), and is required for chromosome segregation when cells enter into mitosis. Regulates Hox gene expression via histone H2A deubiquitination. Prefers nucleosomal substrates. Does not deubiquitinate histone H2B. The polypeptide is Ubiquitin carboxyl-terminal hydrolase 16 (usp16) (Danio rerio (Zebrafish)).